The primary structure comprises 162 residues: Caveolin-2 (162 aa).

Residues 1–86 (MGLETEKADV…FEISKYVMYK (86 aa)) lie on the Cytoplasmic side of the membrane. Tyr19 carries the phosphotyrosine; by SRC modification. Phosphoserine occurs at positions 20 and 23. Tyr27 carries the phosphotyrosine; by SRC modification. Residue Ser36 is modified to Phosphoserine. Residues 87–107 (FLTVFLAIPLAFLAGILFATL) constitute an intramembrane region (helical). Residues 108–162 (SCLHIWIIMPFVKTCLMVLPSVQTIWKSVTDAIIAPLCTSIGRSFSSVSLQLSQD) lie on the Cytoplasmic side of the membrane.

Belongs to the caveolin family. Monomer or homodimer. Interacts with CAV1; the interaction forms a stable heterooligomeric complex that is required for targeting to lipid rafts and for caveolae formation. Tyrosine phosphorylated forms do not form heterooligomers with the Tyr-19-phosphorylated form existing as a monomer or dimer, and the Tyr-27-form as a monomer only. Interacts (tyrosine phosphorylated form) with the SH2 domain-containing proteins, RASA1, NCK1 and SRC. Interacts (tyrosine phosphorylated form) with INSR, the interaction (Tyr-27-phosphorylated form) is increased on insulin stimulation. Interacts (Tyr-19 phosphorylated form) with MAPK1 (phosphorylated form); the interaction, promoted by insulin, leads to nuclear location and MAPK1 activation. Interacts with STAT3; the interaction is increased on insulin-induced tyrosine phosphorylation leading to STAT activation. Phosphorylated on serine and tyrosine residues. CAV1 promotes phosphorylation on Ser-23 which then targets the complex to the plasma membrane, lipid rafts and caveolae. Phosphorylation on Ser-36 appears to modulate mitosis in endothelial cells. Phosphorylation on both Tyr-19 and Tyr-27 is required for insulin-induced 'Ser-727' phosphorylation of STAT3 and its activation. Phosphorylation on Tyr-19 is required for insulin-induced phosphorylation of MAPK1 and DNA binding of STAT3. Tyrosine phosphorylation is induced by both EGF and insulin (By. similarity).

It is found in the nucleus. The protein localises to the cytoplasm. The protein resides in the golgi apparatus membrane. Its subcellular location is the cell membrane. It localises to the membrane. It is found in the caveola. May act as a scaffolding protein within caveolar membranes. Interacts directly with G-protein alpha subunits and can functionally regulate their activity. Acts as an accessory protein in conjunction with CAV1 in targeting to lipid rafts and driving caveolae formation. The Ser-36 phosphorylated form has a role in modulating mitosis in endothelial cells. Positive regulator of cellular mitogenesis of the MAPK signaling pathway. Required for the insulin-stimulated nuclear translocation and activation of MAPK1 and STAT3, and the subsequent regulation of cell cycle progression. The protein is Caveolin-2 (CAV2) of Callithrix jacchus (White-tufted-ear marmoset).